The primary structure comprises 952 residues: Protein translocase subunit SecA (952 aa).

ATP is bound by residues glutamine 135, glycine 153–threonine 157, and aspartate 575. The segment covering arginine 614–leucine 624 has biased composition (basic and acidic residues). Disordered regions lie at residues arginine 614–serine 636 and valine 916–tyrosine 946. Zn(2+)-binding residues include cysteine 938, cysteine 940, cysteine 949, and cysteine 950.

The protein belongs to the SecA family. Monomer and homodimer. Part of the essential Sec protein translocation apparatus which comprises SecA, SecYEG and auxiliary proteins SecDF. Other proteins may also be involved. The cofactor is Zn(2+).

It localises to the cell membrane. The protein resides in the cytoplasm. It carries out the reaction ATP + H2O + cellular proteinSide 1 = ADP + phosphate + cellular proteinSide 2.. In terms of biological role, part of the Sec protein translocase complex. Interacts with the SecYEG preprotein conducting channel. Has a central role in coupling the hydrolysis of ATP to the transfer of proteins into and across the cell membrane, serving as an ATP-driven molecular motor driving the stepwise translocation of polypeptide chains across the membrane. The protein is Protein translocase subunit SecA of Dehalococcoides mccartyi (strain ATCC BAA-2100 / JCM 16839 / KCTC 5957 / BAV1).